We begin with the raw amino-acid sequence, 210 residues long: T-cell antigen CD7 (210 aa).

An N-terminal signal peptide occupies residues 1–23 (MTQQAVLALLLTLAGILPGPLDA). Positions 24–129 (QDVHQSPRLT…RGLFTTVVVK (106 aa)) constitute an Ig-like domain. Residues 24–150 (QDVHQSPRLT…EPLQTSFSFP (127 aa)) lie on the Extracellular side of the membrane. Residues asparagine 42, asparagine 86, and asparagine 93 are each glycosylated (N-linked (GlcNAc...) asparagine). Cysteine 45 and cysteine 111 are disulfide-bonded. A helical membrane pass occupies residues 151-171 (AAIAVGFFFTGLLLGVVCSML). Cysteine 168 carries S-palmitoyl cysteine lipidation. Over 172-210 (RKIQIKKLCASGIKESPCVVYEDMSYSNRKTPCIPNQYQ) the chain is Cytoplasmic.

Interacts with SECTM1.

The protein localises to the membrane. Functionally, transmembrane glycoprotein expressed by T-cells and natural killer (NK) cells and their precursors. Plays a costimulatory role in T-cell activation upon binding to its ligand K12/SECTM1. In turn, mediates the production of cytokines such as IL-2. On resting NK-cells, CD7 activation results in a significant induction of gamma-interferon levels. The sequence is that of T-cell antigen CD7 (Cd7) from Mus musculus (Mouse).